The sequence spans 704 residues: Elongation factor G (704 aa).

Residues 8 to 291 (VRYRNIGISA…AVVEYLPSPS (284 aa)) enclose the tr-type G domain. Residues 17–24 (AHIDAGKT), 88–92 (DTPGH), and 142–145 (NKMD) contribute to the GTP site.

This sequence belongs to the TRAFAC class translation factor GTPase superfamily. Classic translation factor GTPase family. EF-G/EF-2 subfamily.

It is found in the cytoplasm. Catalyzes the GTP-dependent ribosomal translocation step during translation elongation. During this step, the ribosome changes from the pre-translocational (PRE) to the post-translocational (POST) state as the newly formed A-site-bound peptidyl-tRNA and P-site-bound deacylated tRNA move to the P and E sites, respectively. Catalyzes the coordinated movement of the two tRNA molecules, the mRNA and conformational changes in the ribosome. This Blochmanniella pennsylvanica (strain BPEN) protein is Elongation factor G.